Reading from the N-terminus, the 133-residue chain is Fluoride-specific ion channel FluC (133 aa).

A run of 4 helical transmembrane segments spans residues 12–32 (LAMT…ASLI), 41–61 (WGTL…LVWL), 76–96 (IVGV…CLVF), and 104–124 (MIGI…VAGA). Na(+) contacts are provided by G81 and T84.

Belongs to the fluoride channel Fluc/FEX (TC 1.A.43) family.

Its subcellular location is the cell inner membrane. It carries out the reaction fluoride(in) = fluoride(out). With respect to regulation, na(+) is not transported, but it plays an essential structural role and its presence is essential for fluoride channel function. Fluoride-specific ion channel. Important for reducing fluoride concentration in the cell, thus reducing its toxicity. This chain is Fluoride-specific ion channel FluC, found in Xanthomonas euvesicatoria pv. vesicatoria (strain 85-10) (Xanthomonas campestris pv. vesicatoria).